A 448-amino-acid chain; its full sequence is Tubulin alpha-2 chain (448 aa).

The GTP site is built by Gln11, Glu69, Ser138, Gly142, Thr143, Thr177, Asn204, and Asn226. Glu69 is a Mg(2+) binding site. Glu252 is a catalytic residue. The interval 428–448 (KDYEEVGADSNEGGEEEGEEY) is disordered. A compositionally biased stretch (acidic residues) spans 429-448 (DYEEVGADSNEGGEEEGEEY).

The protein belongs to the tubulin family. In terms of assembly, dimer of alpha and beta chains. A typical microtubule is a hollow water-filled tube with an outer diameter of 25 nm and an inner diameter of 15 nM. Alpha-beta heterodimers associate head-to-tail to form protofilaments running lengthwise along the microtubule wall with the beta-tubulin subunit facing the microtubule plus end conferring a structural polarity. Microtubules usually have 13 protofilaments but different protofilament numbers can be found in some organisms and specialized cells. The cofactor is Mg(2+). In terms of processing, undergoes a tyrosination/detyrosination cycle, the cyclic removal and re-addition of a C-terminal tyrosine residue. As to expression, expressed in intestine, pharyngeal muscle cells, and a subset of neurons.

The protein localises to the cytoplasm. It localises to the cytoskeleton. The catalysed reaction is GTP + H2O = GDP + phosphate + H(+). Functionally, tubulin is the major constituent of microtubules, a cylinder consisting of laterally associated linear protofilaments composed of alpha- and beta-tubulin heterodimers. Microtubules grow by the addition of GTP-tubulin dimers to the microtubule end, where a stabilizing cap forms. Below the cap, tubulin dimers are in GDP-bound state, owing to GTPase activity of alpha-tubulin. Required for the normal dynamic behavior of the non-centrosomal microtubules in the epidermal syncytium. Involved in the redistribution of microtubule end-binding protein EB1/ebp-2 caused by wounding. Required to modulate expression in the epidermis of antimicrobial peptides, such as nlp-29, after wounding, or fungal infection. This chain is Tubulin alpha-2 chain (tba-2), found in Caenorhabditis elegans.